A 279-amino-acid chain; its full sequence is NADH dehydrogenase [ubiquinone] iron-sulfur protein 3, mitochondrial (279 aa).

Residues 1-27 constitute a mitochondrion transit peptide; sequence MISRTLLKRSLPTVQFLRPFTRSSIRR. Residues 249 to 279 form a disordered region; sequence EPVGEGKDFTPESFKLPTPEPEPEKESDEKK. The segment covering 270–279 has biased composition (basic and acidic residues); the sequence is EPEKESDEKK.

This sequence belongs to the complex I 30 kDa subunit family. As to quaternary structure, core subunit of respiratory chain NADH dehydrogenase (Complex I).

It localises to the mitochondrion inner membrane. It carries out the reaction a ubiquinone + NADH + 5 H(+)(in) = a ubiquinol + NAD(+) + 4 H(+)(out). Functionally, core subunit of the mitochondrial membrane respiratory chain NADH dehydrogenase (Complex I) which catalyzes electron transfer from NADH through the respiratory chain, using ubiquinone as an electron acceptor. Plays a role in cell wall integrity and is involved in osmotic and oxidative resistance, yeast to hypha transition and the ability to damage and invade oral epithelial cells. In Candida albicans (strain SC5314 / ATCC MYA-2876) (Yeast), this protein is NADH dehydrogenase [ubiquinone] iron-sulfur protein 3, mitochondrial (ALI1).